The following is a 61-amino-acid chain: Small ribosomal subunit protein uS14B (61 aa).

Residues Cys24, Cys27, Cys40, and Cys43 each contribute to the Zn(2+) site.

Belongs to the universal ribosomal protein uS14 family. Zinc-binding uS14 subfamily. In terms of assembly, part of the 30S ribosomal subunit. Contacts proteins S3 and S10. It depends on Zn(2+) as a cofactor.

Its function is as follows. Binds 16S rRNA, required for the assembly of 30S particles and may also be responsible for determining the conformation of the 16S rRNA at the A site. The protein is Small ribosomal subunit protein uS14B of Bacillus licheniformis (strain ATCC 14580 / DSM 13 / JCM 2505 / CCUG 7422 / NBRC 12200 / NCIMB 9375 / NCTC 10341 / NRRL NRS-1264 / Gibson 46).